The chain runs to 218 residues: Peptide methionine sulfoxide reductase MsrA (218 aa).

Residue cysteine 57 is part of the active site.

This sequence belongs to the MsrA Met sulfoxide reductase family.

The catalysed reaction is L-methionyl-[protein] + [thioredoxin]-disulfide + H2O = L-methionyl-(S)-S-oxide-[protein] + [thioredoxin]-dithiol. It catalyses the reaction [thioredoxin]-disulfide + L-methionine + H2O = L-methionine (S)-S-oxide + [thioredoxin]-dithiol. Has an important function as a repair enzyme for proteins that have been inactivated by oxidation. Catalyzes the reversible oxidation-reduction of methionine sulfoxide in proteins to methionine. The sequence is that of Peptide methionine sulfoxide reductase MsrA from Brucella melitensis biotype 1 (strain ATCC 23456 / CCUG 17765 / NCTC 10094 / 16M).